Reading from the N-terminus, the 259-residue chain is Phosphatidylglycerol--prolipoprotein diacylglyceryl transferase (259 aa).

Helical transmembrane passes span 12–32 (LAIHWYALCILSGLVLAVYLA), 41–61 (ISSDAIFDFILIAFPLAIVGA), 80–100 (IIAIWNGGIAIYGGLITGALV), and 109–129 (VLNPIHFLDIAAPSVMVAQAI). Arg-131 is a binding site for a 1,2-diacyl-sn-glycero-3-phospho-(1'-sn-glycerol). 3 helical membrane passes run 167-187 (IPTFLYESLWNLLGFVIIMMW), 194-214 (LLDGEIFAFYLIWYGSGRLVI), and 226-246 (GIRISQYVSALLIIIGLIFVI).

Belongs to the Lgt family.

It localises to the cell membrane. It carries out the reaction L-cysteinyl-[prolipoprotein] + a 1,2-diacyl-sn-glycero-3-phospho-(1'-sn-glycerol) = an S-1,2-diacyl-sn-glyceryl-L-cysteinyl-[prolipoprotein] + sn-glycerol 1-phosphate + H(+). It participates in protein modification; lipoprotein biosynthesis (diacylglyceryl transfer). Its function is as follows. Catalyzes the transfer of the diacylglyceryl group from phosphatidylglycerol to the sulfhydryl group of the N-terminal cysteine of a prolipoprotein, the first step in the formation of mature lipoproteins. The sequence is that of Phosphatidylglycerol--prolipoprotein diacylglyceryl transferase from Streptococcus pyogenes serotype M49 (strain NZ131).